The primary structure comprises 114 residues: RutC family protein YoaB (114 aa).

Belongs to the RutC family.

This chain is RutC family protein YoaB (yoaB), found in Escherichia coli O6:H1 (strain CFT073 / ATCC 700928 / UPEC).